An 888-amino-acid chain; its full sequence is Patched domain-containing protein 1 (888 aa).

The chain crosses the membrane as a helical span at residues 20–40 (FIASHPVFFASAPVLISILLG). 3 N-linked (GlcNAc...) asparagine glycosylation sites follow: asparagine 77, asparagine 133, and asparagine 167. The SSD domain maps to 268 to 427 (SERYLVTSLI…LSFYGSSLVF (160 aa)). Helical transmembrane passes span 273 to 293 (VTSL…QDCV) and 298 to 318 (WLGL…AGII). N-linked (GlcNAc...) asparagine glycosylation is found at asparagine 319 and asparagine 326. Transmembrane regions (helical) follow at residues 328 to 348 (TFLG…FEML), 373 to 393 (LSFS…ASPF), 407 to 427 (CIAI…SLVF), and 502 to 522 (PFVV…YLQV). Asparagine 568, asparagine 599, and asparagine 608 each carry an N-linked (GlcNAc...) asparagine glycan. The next 2 membrane-spanning stretches (helical) occupy residues 707-727 (ALFL…NVWI) and 738-758 (VIGF…LCLI). N-linked (GlcNAc...) asparagine glycosylation occurs at asparagine 762. Residues 795–815 (GVAILQSYLCYIVGLFPLAAV) traverse the membrane as a helical segment. Asparagine 818 carries N-linked (GlcNAc...) asparagine glycosylation. Residues 826-846 (CLFLIAFVTFFHCFAILPVIL) traverse the membrane as a helical segment.

The protein belongs to the patched family. In terms of tissue distribution, broadly expressed in the brain. Selectively expressed in the thalamic reticular nucleus (TRN) in early development and continues to be enriched in this structure throughout adult life.

Its subcellular location is the cell membrane. It localises to the cell projection. It is found in the dendritic spine. Required for the development and function of the thalamic reticular nucleus (TRN), a part of the thalamus that is critical for thalamocortical transmission, generation of sleep rhythms, sensorimotor processing and attention. Can bind cholesterol in vitro. This chain is Patched domain-containing protein 1, found in Mus musculus (Mouse).